The chain runs to 309 residues: UPF0282 protein Saci_0277 (309 aa).

The protein belongs to the UPF0282 family.

This Sulfolobus acidocaldarius (strain ATCC 33909 / DSM 639 / JCM 8929 / NBRC 15157 / NCIMB 11770) protein is UPF0282 protein Saci_0277.